Here is a 1022-residue protein sequence, read N- to C-terminus: Collagen alpha-2(VI) chain (1022 aa).

The first 27 residues, 1–27 (MSRRTAEMFQQAFLSTLLCVALVPLHA), serve as a signal peptide directing secretion. The tract at residues 28 to 255 (QFDDEPVTSC…CYKMTCLEIA (228 aa)) is nonhelical region. The 125-residue stretch at 44-168 (PISVYFVIDT…VITDGHVTGS (125 aa)) folds into the VWFA 1 domain. Asn-141 and Asn-215 each carry an N-linked (GlcNAc...) asparagine glycan. Residues 256–590 (GPAGPKGYRG…PGPPGDPGLT (335 aa)) are triple-helical region. Residues 263-587 (YRGQKGAKGN…EGTPGPPGDP (325 aa)) form a disordered region. The span at 287-299 (DPGIEGPIGYPGP) shows a compositional bias: low complexity. The segment covering 306 to 318 (KGEKGEIGSDGRR) has biased composition (basic and acidic residues). N-linked (GlcNAc...) asparagine glycosylation is present at Asn-327. 2 consecutive short sequence motifs (cell attachment site) follow at residues 348–350 (RGD) and 366–368 (RGD). Basic and acidic residues predominate over residues 363–377 (QGERGDEGMKGDPGR). A compositionally biased stretch (low complexity) spans 389-399 (EKGSPGIPGNP). 5 short sequence motifs (cell attachment site) span residues 426–428 (RGD), 444–446 (RGD), 465–467 (RGD), 489–491 (RGD), and 498–500 (RGD). The tract at residues 514–519 (GFSYPG) is interruption in collagenous region. The segment covering 534 to 543 (GPKGGRGELG) has biased composition (gly residues). The interval 591–1022 (DCDVMTYVRE…FFDRFIRWIC (432 aa)) is nonhelical region. 2 VWFA domains span residues 613-738 (ALDI…YDPR) and 833-957 (DIVF…ITGS). N-linked (GlcNAc...) asparagine glycosylation is found at Asn-630 and Asn-897.

It belongs to the type VI collagen family. As to quaternary structure, trimers composed of three different chains: alpha 1(VI), alpha 2(VI), and alpha 3(VI). In terms of processing, prolines at the third position of the tripeptide repeating unit (G-X-Y) are hydroxylated in some or all of the chains.

Its subcellular location is the secreted. It is found in the extracellular space. It localises to the extracellular matrix. Collagen VI acts as a cell-binding protein. The chain is Collagen alpha-2(VI) chain (COL6A2) from Gallus gallus (Chicken).